We begin with the raw amino-acid sequence, 326 residues long: 4-hydroxythreonine-4-phosphate dehydrogenase (326 aa).

Residues histidine 132 and threonine 133 each contribute to the substrate site. Positions 162, 207, and 262 each coordinate a divalent metal cation. Residues lysine 270, asparagine 279, and arginine 288 each contribute to the substrate site.

It belongs to the PdxA family. In terms of assembly, homodimer. Requires Zn(2+) as cofactor. It depends on Mg(2+) as a cofactor. Co(2+) is required as a cofactor.

The protein resides in the cytoplasm. The catalysed reaction is 4-(phosphooxy)-L-threonine + NAD(+) = 3-amino-2-oxopropyl phosphate + CO2 + NADH. It functions in the pathway cofactor biosynthesis; pyridoxine 5'-phosphate biosynthesis; pyridoxine 5'-phosphate from D-erythrose 4-phosphate: step 4/5. Its function is as follows. Catalyzes the NAD(P)-dependent oxidation of 4-(phosphooxy)-L-threonine (HTP) into 2-amino-3-oxo-4-(phosphooxy)butyric acid which spontaneously decarboxylates to form 3-amino-2-oxopropyl phosphate (AHAP). This Ruegeria sp. (strain TM1040) (Silicibacter sp.) protein is 4-hydroxythreonine-4-phosphate dehydrogenase.